Consider the following 178-residue polypeptide: Large ribosomal subunit protein uL6 (178 aa).

Belongs to the universal ribosomal protein uL6 family. In terms of assembly, part of the 50S ribosomal subunit.

Its function is as follows. This protein binds to the 23S rRNA, and is important in its secondary structure. It is located near the subunit interface in the base of the L7/L12 stalk, and near the tRNA binding site of the peptidyltransferase center. This chain is Large ribosomal subunit protein uL6, found in Thermobifida fusca (strain YX).